Reading from the N-terminus, the 150-residue chain is Macrodomain Ter protein (150 aa).

It belongs to the MatP family. Homodimer.

Its subcellular location is the cytoplasm. Functionally, required for spatial organization of the terminus region of the chromosome (Ter macrodomain) during the cell cycle. Prevents early segregation of duplicated Ter macrodomains during cell division. Binds specifically to matS, which is a 13 bp signature motif repeated within the Ter macrodomain. This is Macrodomain Ter protein from Salmonella typhi.